A 382-amino-acid chain; its full sequence is F-box/kelch-repeat protein KIB1 (382 aa).

Positions 22-69 (SKHSILAVDLVRLILERLSFVDFHRARCVSSIWYIASKTVIGVTNPTT) constitute an F-box domain. 3 Kelch repeats span residues 73–117 (ILFP…ASSG), 159–209 (VLWV…FKEN), and 259–306 (IVAK…ITVE).

As to quaternary structure, part of a SCF (SKP1-cullin-F-box) protein ligase complex. Binds directly to several GSK3 family proteins such as SKP1A/ASK1, ASK1/SK11, ASK3/SK12, ASK5/SK13, ASK7/BIN2/SK21, ASK9/SK22 and ASK6/SK23. Interacts with ASK7/BIN2/SK21 in a brassinosteroid (BR)-dependent manner. In terms of tissue distribution, expressed in seedlings, leaves, stems, flower buds and flowers.

It is found in the cytoplasm. It localises to the nucleus. The protein localises to the nucleolus. Its function is as follows. Component of SCF(ASK-cullin-F-box) E3 ubiquitin ligase complexes, which may mediate the ubiquitination and subsequent proteasomal degradation of target proteins. Required for brassinosteroid (BR) signal transduction. Mediates ASK7/BIN2/SK21 inactivation both by competing with substrate binding (e.g. BZR1) and by promoting its ubiquitination and subsequent proteasomal degradation. The sequence is that of F-box/kelch-repeat protein KIB1 from Arabidopsis thaliana (Mouse-ear cress).